Here is a 128-residue protein sequence, read N- to C-terminus: Ribonuclease P protein component (128 aa).

It belongs to the RnpA family. In terms of assembly, consists of a catalytic RNA component (M1 or rnpB) and a protein subunit.

It catalyses the reaction Endonucleolytic cleavage of RNA, removing 5'-extranucleotides from tRNA precursor.. RNaseP catalyzes the removal of the 5'-leader sequence from pre-tRNA to produce the mature 5'-terminus. It can also cleave other RNA substrates such as 4.5S RNA. The protein component plays an auxiliary but essential role in vivo by binding to the 5'-leader sequence and broadening the substrate specificity of the ribozyme. This Parasynechococcus marenigrum (strain WH8102) protein is Ribonuclease P protein component.